The chain runs to 112 residues: 2Fe-2S ferredoxin (112 aa).

Residues Ile5 to Thr107 enclose the 2Fe-2S ferredoxin-type domain. Residues Cys42, Cys48, Cys51, and Cys88 each coordinate [2Fe-2S] cluster.

It belongs to the adrenodoxin/putidaredoxin family. It depends on [2Fe-2S] cluster as a cofactor.

In terms of biological role, ferredoxin are iron-sulfur proteins that transfer electrons in a wide variety of metabolic reactions. This Rickettsia felis (strain ATCC VR-1525 / URRWXCal2) (Rickettsia azadi) protein is 2Fe-2S ferredoxin (fdxB).